A 346-amino-acid chain; its full sequence is Coproporphyrin III ferrochelatase (346 aa).

Residues Ser-52 and Tyr-121 each contribute to the Fe-coproporphyrin III site. Residues His-181 and Glu-264 each contribute to the Fe(2+) site.

This sequence belongs to the ferrochelatase family.

It localises to the cytoplasm. It catalyses the reaction Fe-coproporphyrin III + 2 H(+) = coproporphyrin III + Fe(2+). Its pathway is porphyrin-containing compound metabolism; protoheme biosynthesis. Involved in coproporphyrin-dependent heme b biosynthesis. Catalyzes the insertion of ferrous iron into coproporphyrin III to form Fe-coproporphyrin III. This chain is Coproporphyrin III ferrochelatase, found in Mycobacterium sp. (strain KMS).